The primary structure comprises 430 residues: Adenosylhomocysteinase (430 aa).

Substrate-binding residues include Thr-56, Asp-131, and Glu-156. Residue 157-159 coordinates NAD(+); that stretch reads TTT. The substrate site is built by Lys-186 and Asp-190. NAD(+) is bound by residues Asn-191, 220 to 225, Glu-243, Asn-278, 299 to 301, and Asn-344; these read GFGDVG and IGH.

It belongs to the adenosylhomocysteinase family. NAD(+) serves as cofactor.

Its subcellular location is the cytoplasm. It catalyses the reaction S-adenosyl-L-homocysteine + H2O = L-homocysteine + adenosine. It participates in amino-acid biosynthesis; L-homocysteine biosynthesis; L-homocysteine from S-adenosyl-L-homocysteine: step 1/1. Functionally, may play a key role in the regulation of the intracellular concentration of adenosylhomocysteine. This chain is Adenosylhomocysteinase, found in Halorhodospira halophila (strain DSM 244 / SL1) (Ectothiorhodospira halophila (strain DSM 244 / SL1)).